A 57-amino-acid chain; its full sequence is Potassium channel toxin alpha-KTx 4.2 (57 aa).

Residues 1–20 form the signal peptide; sequence MKVLYGILIIFILCSMFYLS. Residues 21–22 constitute a propeptide, removed by a carboxypeptidase; that stretch reads QE. Cystine bridges form between Cys29–Cys50, Cys35–Cys55, and Cys39–Cys57.

This sequence belongs to the short scorpion toxin superfamily. Potassium channel inhibitor family. Alpha-KTx 04 subfamily. Expressed by the venom gland.

The protein localises to the secreted. Its function is as follows. Blocker for small-conductance calcium-activated potassium channels KCa2.2/KCNN2 (Kd=80 nM) and KCa2.3/KCNN3 (Kd=197 nM) and ERG1/Kv11.1/KCNH2 potassium channels (53% inhibition at 5 uM). Has also been shown to inhibit Kv1.1/KCNA1 and Nav1.7/SCN9A with a moderate potency, as well as Kv11.1/KCNH2/ERG1 and Kv1.2/KCNA2 with a low potency. In Tityus serrulatus (Brazilian scorpion), this protein is Potassium channel toxin alpha-KTx 4.2.